The sequence spans 436 residues: Glutamate-1-semialdehyde 2,1-aminomutase (436 aa).

Lys270 carries the N6-(pyridoxal phosphate)lysine modification.

This sequence belongs to the class-III pyridoxal-phosphate-dependent aminotransferase family. HemL subfamily. As to quaternary structure, homodimer. Pyridoxal 5'-phosphate serves as cofactor.

It localises to the cytoplasm. The enzyme catalyses (S)-4-amino-5-oxopentanoate = 5-aminolevulinate. Its pathway is porphyrin-containing compound metabolism; protoporphyrin-IX biosynthesis; 5-aminolevulinate from L-glutamyl-tRNA(Glu): step 2/2. The protein is Glutamate-1-semialdehyde 2,1-aminomutase of Cutibacterium acnes (strain DSM 16379 / KPA171202) (Propionibacterium acnes).